A 298-amino-acid chain; its full sequence is MNALTLPDIARQTTTADLPLDWVGMQGIALPVQIGGQRVAAEADAGVSLDDPQARGIHMSRLYLALAELEQGELDLSCLRAVLQRFLDSHAGLSRRAYLRLRLAPLLRRPALVSPLSGWKRYPLVLDTRLEGDDFQAEVHLELTYSSTCPCSAALARQLIQERFDQDFAGQPLDHASVLAWLGSSAGIVATPHSQRSSAHLRIGLAEDCIGLPLEELADLGESALGTAVQTAVKRADEQAFALANGQNLMFCEDAVRRLHRALQGYPQASRFSIRVVHAESLHAHDAVAESHWQRGAA.

This sequence belongs to the GTP cyclohydrolase IV family.

It catalyses the reaction GTP + H2O = 7,8-dihydroneopterin 3'-triphosphate + formate + H(+). It functions in the pathway cofactor biosynthesis; 7,8-dihydroneopterin triphosphate biosynthesis; 7,8-dihydroneopterin triphosphate from GTP: step 1/1. Its function is as follows. Converts GTP to 7,8-dihydroneopterin triphosphate. This is GTP cyclohydrolase FolE2 from Pseudomonas aeruginosa (strain LESB58).